The primary structure comprises 1285 residues: Peroxisomal ATPase PEX1 (1285 aa).

Polar residues predominate over residues 344-353; the sequence is QQGKTKQSVM. Residues 344–373 are disordered; that stretch reads QQGKTKQSVMSPEKEKHPLESPNHKQIGSD. Phosphoserine is present on S354. Basic and acidic residues predominate over residues 355 to 373; the sequence is PEKEKHPLESPNHKQIGSD. ATP contacts are provided by residues 601–608 and 883–890; these read GGKGSGKS and GPPGTGKT. Residues 1142-1161 show a composition bias toward polar residues; that stretch reads NGTSSDLSSQCPSAPSSVTQ. The segment at 1142–1162 is disordered; it reads NGTSSDLSSQCPSAPSSVTQD. 3 positions are modified to phosphoserine: S1183, S1211, and S1213. The segment at 1262–1285 is disordered; it reads FQNPKKRKNPSGTVFRPGQKVTLA.

This sequence belongs to the AAA ATPase family. As to quaternary structure, homooligomer; homooligomerizes in the cytosol, interaction with PEX6 promotes dissociation of the homooligomer. Interacts with PEX6; forming the PEX1-PEX6 AAA ATPase complex, which is composed of a heterohexamer formed by a trimer of PEX1-PEX6 dimers. Interacts indirectly with PEX26, via its interaction with PEX6.

It is found in the cytoplasm. Its subcellular location is the cytosol. The protein resides in the peroxisome membrane. The enzyme catalyses ATP + H2O = ADP + phosphate + H(+). Component of the PEX1-PEX6 AAA ATPase complex, a protein dislocase complex that mediates the ATP-dependent extraction of the PEX5 receptor from peroxisomal membranes, an essential step for PEX5 recycling. Specifically recognizes PEX5 monoubiquitinated at 'Cys-11', and pulls it out of the peroxisome lumen through the PEX2-PEX10-PEX12 retrotranslocation channel. Extraction by the PEX1-PEX6 AAA ATPase complex is accompanied by unfolding of the TPR repeats and release of bound cargo from PEX5. This is Peroxisomal ATPase PEX1 from Cricetulus griseus (Chinese hamster).